A 383-amino-acid chain; its full sequence is ATP phosphoribosyltransferase regulatory subunit (383 aa).

The protein belongs to the class-II aminoacyl-tRNA synthetase family. HisZ subfamily. In terms of assembly, heteromultimer composed of HisG and HisZ subunits.

It localises to the cytoplasm. Its pathway is amino-acid biosynthesis; L-histidine biosynthesis; L-histidine from 5-phospho-alpha-D-ribose 1-diphosphate: step 1/9. Required for the first step of histidine biosynthesis. May allow the feedback regulation of ATP phosphoribosyltransferase activity by histidine. The sequence is that of ATP phosphoribosyltransferase regulatory subunit from Cupriavidus pinatubonensis (strain JMP 134 / LMG 1197) (Cupriavidus necator (strain JMP 134)).